Consider the following 580-residue polypeptide: E3 ubiquitin-protein ligase TRIM45 (580 aa).

The segment at 29–98 (CPTCLRLFKV…QIGILCPVCD (70 aa)) adopts an RING-type zinc-finger fold. 2 B box-type zinc fingers span residues 130-176 (GQGL…MVDL) and 186-227 (GKPI…YDFT). Zn(2+) is bound by residues C135, C138, C158, H162, C191, H194, C214, and H219. A coiled-coil region spans residues 249-329 (VEALEDALAQ…LLADMRTGVE (81 aa)). One copy of the Filamin repeat lies at 394-497 (TQEVDPAQCV…VQGSPFNVTV (104 aa)).

It belongs to the TRIM/RBCC family.

It is found in the cytoplasm. The protein localises to the nucleus. The catalysed reaction is S-ubiquitinyl-[E2 ubiquitin-conjugating enzyme]-L-cysteine + [acceptor protein]-L-lysine = [E2 ubiquitin-conjugating enzyme]-L-cysteine + N(6)-ubiquitinyl-[acceptor protein]-L-lysine.. Its function is as follows. E3 ubiquitin-protein ligase that plays a role in the regulation of inflammatory response. Mechanistically, mediates the 'Lys-48'-linked polyubiquitination of TAB2, a regulatory protein of the kinase TAK1, leading to its degradation via the proteasomal pathway and inhibition of the TLR-mediated inflammatory immune response. May act as a transcriptional repressor in mitogen-activated protein kinase signaling pathway. In Mus musculus (Mouse), this protein is E3 ubiquitin-protein ligase TRIM45 (Trim45).